The following is a 398-amino-acid chain: Acetate kinase 1 (398 aa).

N9 serves as a coordination point for Mg(2+). ATP is bound at residue K16. A substrate-binding site is contributed by R89. The Proton donor/acceptor role is filled by D146. ATP contacts are provided by residues 206–210 (HLGNG), 281–283 (DCR), and 329–333 (GIGEN). A Mg(2+)-binding site is contributed by E384.

The protein belongs to the acetokinase family. In terms of assembly, homodimer. It depends on Mg(2+) as a cofactor. The cofactor is Mn(2+).

It is found in the cytoplasm. The catalysed reaction is acetate + ATP = acetyl phosphate + ADP. The protein operates within metabolic intermediate biosynthesis; acetyl-CoA biosynthesis; acetyl-CoA from acetate: step 1/2. Catalyzes the formation of acetyl phosphate from acetate and ATP. Can also catalyze the reverse reaction. The polypeptide is Acetate kinase 1 (Vibrio cholerae serotype O1 (strain ATCC 39315 / El Tor Inaba N16961)).